The sequence spans 256 residues: Coiled-coil domain-containing protein 90B, mitochondrial (256 aa).

The N-terminal 42 residues, 1–42 (MRNRWIWRFLRPECSGIRWISSPHGRLSPALRRGFLTTTTKS), are a transit peptide targeting the mitochondrion. The stretch at 106–164 (AQQEITIQQLMAHLDSIRKDMVILEKSEFANLRAENEKMKIELDQVKQQLINETSRIRA) forms a coiled coil. A helical membrane pass occupies residues 231–253 (TIRYLAASVFTCLAIALGFYRFW).

It belongs to the CCDC90 family. In terms of assembly, interacts with MCU.

Its subcellular location is the mitochondrion membrane. The polypeptide is Coiled-coil domain-containing protein 90B, mitochondrial (Ccdc90b) (Rattus norvegicus (Rat)).